Here is a 293-residue protein sequence, read N- to C-terminus: Ribosomal protein L11 methyltransferase (293 aa).

S-adenosyl-L-methionine contacts are provided by Thr145, Gly166, Asp188, and Asn230.

This sequence belongs to the methyltransferase superfamily. PrmA family.

The protein localises to the cytoplasm. It catalyses the reaction L-lysyl-[protein] + 3 S-adenosyl-L-methionine = N(6),N(6),N(6)-trimethyl-L-lysyl-[protein] + 3 S-adenosyl-L-homocysteine + 3 H(+). Functionally, methylates ribosomal protein L11. This is Ribosomal protein L11 methyltransferase from Salmonella agona (strain SL483).